We begin with the raw amino-acid sequence, 847 residues long: Zinc transporter ZIP10 (847 aa).

A signal peptide spans 1–26 (MMRVHTHTRLCFLCVLTLLYHQCSHC). The disordered stretch occupies residues 136–374 (GRHSHSAGHP…RREVPGSPAH (239 aa)). Over residues 162–171 (HHENEEHTLA) the composition is skewed to basic and acidic residues. A compositionally biased stretch (polar residues) spans 179-188 (TLGTGATPPS). The span at 190 to 269 (SEEHDHDHEH…QEHNDLSDQN (80 aa)) shows a compositional bias: basic and acidic residues. 2 stretches are compositionally biased toward basic residues: residues 270 to 285 (HHHH…HPHL) and 314 to 330 (TRRH…RGRN). Residue Asn385 is glycosylated (N-linked (GlcNAc...) asparagine). A run of 3 helical transmembrane segments spans residues 447-467 (FVSI…VPIL), 474-494 (FLLT…ALLH), and 529-549 (GLTA…IGMF). Residues 613 to 676 (ELQPLDSPSK…HSHHGHCHSD (64 aa)) form a disordered region. Basic and acidic residues predominate over residues 629-646 (DSDHPYEAPVKTEEDNVP). Positions 648–672 (AKSKKHGHGHGHGHGHGHGHSHHGH) are enriched in basic residues. 4 consecutive transmembrane segments (helical) span residues 705-725 (AIGA…VAVF), 750-770 (IVYN…GTAV), 779-799 (SWIF…DMLP), and 817-837 (FVLQ…IAIF).

The protein belongs to the ZIP transporter (TC 2.A.5) family. Undergoes N-terminal ectodomain shedding.

It localises to the cell membrane. It is found in the apical cell membrane. It catalyses the reaction Zn(2+)(in) = Zn(2+)(out). Zinc-influx transporter. When associated with slc39a6, the heterodimer slc39a10/slc39a6 has a functional role in epithelial-mesenchymal transition (EMT) during embryonic development. Slc39a10/slc39a6 heterodimers play also an essentiel role in initiating mitosis by importing zinc into cells to initiate a pathway resulting in the onset of mitosis. When associated with slc39a6, the heterodimer controls Ncam1 phosphorylation and integration into focal adhesion complexes during EMT. The polypeptide is Zinc transporter ZIP10 (Danio rerio (Zebrafish)).